The following is an 86-amino-acid chain: Cell division topological specificity factor (86 aa).

The protein belongs to the MinE family.

Its function is as follows. Prevents the cell division inhibition by proteins MinC and MinD at internal division sites while permitting inhibition at polar sites. This ensures cell division at the proper site by restricting the formation of a division septum at the midpoint of the long axis of the cell. This Polaromonas sp. (strain JS666 / ATCC BAA-500) protein is Cell division topological specificity factor.